A 91-amino-acid chain; its full sequence is Small ribosomal subunit protein uS19 (91 aa).

Belongs to the universal ribosomal protein uS19 family.

Functionally, protein S19 forms a complex with S13 that binds strongly to the 16S ribosomal RNA. The polypeptide is Small ribosomal subunit protein uS19 (Synechococcus elongatus (strain ATCC 33912 / PCC 7942 / FACHB-805) (Anacystis nidulans R2)).